Here is a 585-residue protein sequence, read N- to C-terminus: Bifunctional lycopene cyclase/phytoene synthase (585 aa).

The tract at residues 1 to 243 (MGFDYAIVHV…IVFGQLAFDN (243 aa)) is lycopene beta-cyclase. Helical transmembrane passes span 3–23 (FDYA…LTLL), 35–55 (KVLF…SYLI), 75–97 (IPLE…YLIL), 123–141 (LAGQ…LRVH), 151–171 (LIVV…YQFI), 173–193 (GLPW…LWLV), and 221–241 (IEEA…QLAF). Residues 250–585 (TFPALFPKPP…AWRTLNKSIA (336 aa)) are phytoene synthase.

This sequence in the N-terminal section; belongs to the lycopene beta-cyclase family. It in the C-terminal section; belongs to the phytoene/squalene synthase family.

The protein resides in the membrane. The catalysed reaction is all-trans-lycopene = gamma-carotene. It carries out the reaction gamma-carotene = all-trans-beta-carotene. The enzyme catalyses 2 (2E,6E,10E)-geranylgeranyl diphosphate = 15-cis-phytoene + 2 diphosphate. It functions in the pathway carotenoid biosynthesis; beta-carotene biosynthesis. It participates in carotenoid biosynthesis; phytoene biosynthesis; all-trans-phytoene from geranylgeranyl diphosphate: step 1/1. Bifunctional enzyme that catalyzes the reactions from geranylgeranyl diphosphate to phytoene (phytoene synthase) and lycopene to beta-carotene via the intermediate gamma-carotene (lycopene cyclase). The protein is Bifunctional lycopene cyclase/phytoene synthase of Phaeosphaeria nodorum (strain SN15 / ATCC MYA-4574 / FGSC 10173) (Glume blotch fungus).